The primary structure comprises 317 residues: Olfactory receptor 2F1 (317 aa).

Over Met-1–Arg-24 the chain is Extracellular. Asn-5 carries N-linked (GlcNAc...) asparagine glycosylation. The chain crosses the membrane as a helical span at residues Val-25–Leu-48. Residues Ile-49–Thr-57 are Cytoplasmic-facing. Residues Pro-58–Pro-79 traverse the membrane as a helical segment. Topologically, residues Gln-80–Gln-100 are extracellular. A disulfide bridge connects residues Cys-97 and Cys-189. A helical transmembrane segment spans residues Leu-101–Tyr-120. Topologically, residues Asp-121–Gly-139 are cytoplasmic. Residues Leu-140 to Thr-160 form a helical membrane-spanning segment. Topologically, residues Ala-161 to Met-200 are extracellular. Residues Val-201–Ile-222 traverse the membrane as a helical segment. The Cytoplasmic portion of the chain corresponds to Ser-223–Lys-236. A helical transmembrane segment spans residues Ala-237–Gln-261. Topologically, residues Pro-262–Lys-272 are extracellular. Residues Leu-273 to Leu-292 form a helical membrane-spanning segment. The Cytoplasmic segment spans residues Arg-293–Thr-317.

It belongs to the G-protein coupled receptor 1 family.

Its subcellular location is the cell membrane. Functionally, odorant receptor. This Homo sapiens (Human) protein is Olfactory receptor 2F1 (OR2F1).